The sequence spans 1066 residues: Zinc finger and BTB domain-containing protein 21 (1066 aa).

One can recognise a BTB domain in the interval 30–96 (CDVLLIVGDQ…IYSSSLFVEK (67 aa)). The segment at 30–96 (CDVLLIVGDQ…IYSSSLFVEK (67 aa)) is mediates homodimerization. Residue Lys-40 forms a Glycyl lysine isopeptide (Lys-Gly) (interchain with G-Cter in SUMO1); alternate linkage. Lys-40 is covalently cross-linked (Glycyl lysine isopeptide (Lys-Gly) (interchain with G-Cter in SUMO2); alternate). Residues 154 to 177 (SRNEAQGKTVSQNQPDVSHTSRPS) are compositionally biased toward polar residues. The interval 154 to 196 (SRNEAQGKTVSQNQPDVSHTSRPSPSIAVKANTNKPHVPKPIE) is disordered. Residues Lys-255, Lys-266, Lys-273, Lys-312, and Lys-337 each participate in a glycyl lysine isopeptide (Lys-Gly) (interchain with G-Cter in SUMO2) cross-link. 2 positions are modified to phosphoserine: Ser-345 and Ser-381. A Glycyl lysine isopeptide (Lys-Gly) (interchain with G-Cter in SUMO2) cross-link involves residue Lys-383. Residues 388–399 (DCSEKTALDDRP) are compositionally biased toward basic and acidic residues. Disordered regions lie at residues 388–442 (DCSE…DPSD), 454–485 (TAAA…AKRR), and 498–525 (KVNE…ADFP). Ser-411 and Ser-422 each carry phosphoserine. A Glycyl lysine isopeptide (Lys-Gly) (interchain with G-Cter in SUMO2) cross-link involves residue Lys-430. Thr-431 is subject to Phosphothreonine. Ser-434, Ser-435, and Ser-438 each carry phosphoserine. Residues 466 to 478 (LSLKTEDDQKDMS) are compositionally biased toward basic and acidic residues. Residues Lys-469 and Lys-475 each participate in a glycyl lysine isopeptide (Lys-Gly) (interchain with G-Cter in SUMO2) cross-link. C2H2-type zinc fingers lie at residues 546–569 (FKCK…NMYH) and 575–598 (YACD…QTQH). Ser-605 carries the phosphoserine modification. Glycyl lysine isopeptide (Lys-Gly) (interchain with G-Cter in SUMO2) cross-links involve residues Lys-617, Lys-643, and Lys-659. A C2H2-type 3 zinc finger spans residues 670–692 (YICTYCGKAYRFLSQFKQHIKMH). Residue Lys-702 forms a Glycyl lysine isopeptide (Lys-Gly) (interchain with G-Cter in SUMO2) linkage. Residue Ser-714 is modified to Phosphoserine. A C2H2-type 4; atypical zinc finger spans residues 748-770 (AVCPYCSLRFFSPELKQEHESKC). Glycyl lysine isopeptide (Lys-Gly) (interchain with G-Cter in SUMO2) cross-links involve residues Lys-763 and Lys-785. The C2H2-type 5 zinc finger occupies 775–798 (LTCLECMRTFKSSFSIWRHQVEVH). The tract at residues 806–840 (TENFSLPVLDHNGDVTGSSRPQSQPEPNKVNHIVT) is disordered. A compositionally biased stretch (polar residues) spans 820–831 (VTGSSRPQSQPE). A Glycyl lysine isopeptide (Lys-Gly) (interchain with G-Cter in SUMO2) cross-link involves residue Lys-875. Residue Lys-879 forms a Glycyl lysine isopeptide (Lys-Gly) (interchain with G-Cter in SUMO1); alternate linkage. Lys-879 is covalently cross-linked (Glycyl lysine isopeptide (Lys-Gly) (interchain with G-Cter in SUMO2); alternate). A disordered region spans residues 879 to 906 (KEEPVEEAEEEAPEASTAPKEAGPSKEA). Acidic residues predominate over residues 882–891 (PVEEAEEEAP). The C2H2-type 6; atypical zinc finger occupies 909–932 (WPCEKCGKMFTVHKQLERHQELLC). A Glycyl lysine isopeptide (Lys-Gly) (interchain with G-Cter in SUMO2) cross-link involves residue Lys-935. A C2H2-type 7 zinc finger spans residues 937 to 959 (FICHVCNKAFRTNFRLWSHFQSH). Residues 963-1014 (ASEESAHKESEVCPVPTNSPSPPPLPPPPPLPKIQPLEPDSPTGLSENPTPA) are disordered. The span at 979-995 (TNSPSPPPLPPPPPLPK) shows a compositional bias: pro residues. Ser-1003 is subject to Phosphoserine. The segment at 1043-1065 (FMCKLCHRTFKTAFSLWSHEQTH) adopts a C2H2-type 8 zinc-finger fold.

In terms of assembly, homodimer. Interacts with ZBTB14. In terms of tissue distribution, ubiquitous in fetal and adult tissues.

Its subcellular location is the nucleus. Functionally, acts as a transcription repressor. This is Zinc finger and BTB domain-containing protein 21 (ZBTB21) from Homo sapiens (Human).